We begin with the raw amino-acid sequence, 556 residues long: Phenylalanine--tRNA ligase beta subunit (556 aa).

A B5 domain is found at 274 to 349 (HEPEEMEVDL…ITLGLNKIGY (76 aa)). Mg(2+)-binding residues include aspartate 327, aspartate 333, glutamate 336, and glutamate 337.

This sequence belongs to the phenylalanyl-tRNA synthetase beta subunit family. Type 2 subfamily. Tetramer of two alpha and two beta subunits. Requires Mg(2+) as cofactor.

The protein localises to the cytoplasm. It catalyses the reaction tRNA(Phe) + L-phenylalanine + ATP = L-phenylalanyl-tRNA(Phe) + AMP + diphosphate + H(+). The chain is Phenylalanine--tRNA ligase beta subunit from Korarchaeum cryptofilum (strain OPF8).